We begin with the raw amino-acid sequence, 1036 residues long: uncharacterized protein (1036 aa).

2 helical membrane passes run 4–24 (YLFI…NASL) and 1004–1024 (ILWV…VLFL).

It belongs to the MG414/MG415 family.

It localises to the cell membrane. This is an uncharacterized protein from Mycoplasma genitalium (strain ATCC 33530 / DSM 19775 / NCTC 10195 / G37) (Mycoplasmoides genitalium).